Consider the following 152-residue polypeptide: MKLILTTAVDKLGVPGDIVEVKAGYGRNYLLPRGYAIVATRGAEKQIKDIQRAKADRVIRDQEHAEAVKAELEALSAVQVPVRTAQGGKLFGSVTSADVVAAVERAGGPKLDKHAIKLPKNSIKNTGKYAVDVKLVSGMTANLEFAVVDADK.

It belongs to the bacterial ribosomal protein bL9 family.

Binds to the 23S rRNA. The polypeptide is Large ribosomal subunit protein bL9 (Corynebacterium urealyticum (strain ATCC 43042 / DSM 7109)).